A 191-amino-acid chain; its full sequence is MKKSLLGLTFASLMFSAGSAVAADYKIDKEGQHAFVNFRIQHLGYSWLYGTFKDFDGTFTFDEKNPAADKVNVTINTTSVDTNHAERDKHLRSADFLNTTKYPQATFTSTSVKKDGDELDITGDLTLNGVTKPVTLEAKLIGQGDDPWGGKRAGFEAEGKIKLKDFNIKTDLGPASQEVDLIISVEGVQQK.

The first 22 residues, 1 to 22, serve as a signal peptide directing secretion; that stretch reads MKKSLLGLTFASLMFSAGSAVA.

Belongs to the UPF0312 family. Type 1 subfamily.

Its subcellular location is the periplasm. The polypeptide is Protein YceI (Shigella flexneri).